A 729-amino-acid chain; its full sequence is DNA topoisomerase 3 (729 aa).

Residues 3-136 (KKAVLAEKPS…VKRLWISSVT (134 aa)) enclose the Toprim domain. Residues Glu-9 and Asp-105 each contribute to the Mg(2+) site. The region spanning 153–590 (YETLYAAAAA…EMKEYAKAVV (438 aa)) is the Topo IA-type catalytic domain. Residues 187–192 (SCGRVQ) form an interaction with DNA region. Tyr-311 (O-(5'-phospho-DNA)-tyrosine intermediate) is an active-site residue. The interval 680 to 708 (FEQRRKQNKHKNVSKREVQSYMKKQNKQD) is disordered.

The protein belongs to the type IA topoisomerase family. Mg(2+) is required as a cofactor.

It carries out the reaction ATP-independent breakage of single-stranded DNA, followed by passage and rejoining.. Its function is as follows. Releases the supercoiling and torsional tension of DNA, which is introduced during the DNA replication and transcription, by transiently cleaving and rejoining one strand of the DNA duplex. Introduces a single-strand break via transesterification at a target site in duplex DNA. The scissile phosphodiester is attacked by the catalytic tyrosine of the enzyme, resulting in the formation of a DNA-(5'-phosphotyrosyl)-enzyme intermediate and the expulsion of a 3'-OH DNA strand. The free DNA strand then undergoes passage around the unbroken strand, thus removing DNA supercoils. Finally, in the religation step, the DNA 3'-OH attacks the covalent intermediate to expel the active-site tyrosine and restore the DNA phosphodiester backbone. In Shouchella clausii (strain KSM-K16) (Alkalihalobacillus clausii), this protein is DNA topoisomerase 3.